The primary structure comprises 495 residues: Angiopoietin-2 (495 aa).

Positions 1-18 are cleaved as a signal peptide; sequence MWQIVFFTLSCDLVRAAA. N-linked (GlcNAc...) asparagine glycosylation is found at N88, N118, N132, N150, N239, and N303. A coiled-coil region spans residues 165 to 247; it reads STNKLEKQIL…VNNSVLQKQQ (83 aa). In terms of domain architecture, Fibrinogen C-terminal spans 274–494; the sequence is KEEQIIYRDC…GTTMMIRPAD (221 aa). Residues C283 and C312 are joined by a disulfide bond. Residues D428, D430, C432, and C434 each contribute to the Ca(2+) site. Disulfide bonds link C432–C434 and C436–C449.

Interacts with TEK/TIE2, competing for the same binding site as ANGPT1. Interacts with ITGA5. Interacts with SVEP1/polydom. Interacts with THBD; this interaction significantly inhibits the generation of activated PC and TAFIa/CPB2 by the thrombin/thrombomodulin complex.

Its subcellular location is the secreted. Its function is as follows. Binds to TEK/TIE2, competing for the ANGPT1 binding site, and modulating ANGPT1 signaling. Can induce tyrosine phosphorylation of TEK/TIE2 in the absence of ANGPT1. In the absence of angiogenic inducers, such as VEGF, ANGPT2-mediated loosening of cell-matrix contacts may induce endothelial cell apoptosis with consequent vascular regression. In concert with VEGF, it may facilitate endothelial cell migration and proliferation, thus serving as a permissive angiogenic signal. Involved in the regulation of lymphangiogenesis. The chain is Angiopoietin-2 (ANGPT2) from Canis lupus familiaris (Dog).